Consider the following 320-residue polypeptide: Malate dehydrogenase (320 aa).

Residues 10–15 (GAGMIG) and D34 each bind NAD(+). Positions 83 and 89 each coordinate substrate. Residues N96 and 119-121 (ITN) each bind NAD(+). Substrate is bound by residues N121 and R152. H176 acts as the Proton acceptor in catalysis.

It belongs to the LDH/MDH superfamily. MDH type 3 family.

The catalysed reaction is (S)-malate + NAD(+) = oxaloacetate + NADH + H(+). Catalyzes the reversible oxidation of malate to oxaloacetate. This is Malate dehydrogenase from Caulobacter sp. (strain K31).